Reading from the N-terminus, the 138-residue chain is Secreted RxLR effector protein 91 (138 aa).

An N-terminal signal peptide occupies residues 1-18 (MVIPHIICLPMALHLWTC). The short motif at 34–37 (RRLR) is the RxLR element. The N-linked (GlcNAc...) asparagine glycan is linked to N93.

Belongs to the RxLR effector family.

It is found in the secreted. It localises to the host nucleus. Secreted effector that completely suppresses the host cell death induced by cell death-inducing proteins. This Plasmopara viticola (Downy mildew of grapevine) protein is Secreted RxLR effector protein 91.